The chain runs to 387 residues: Gamma-butyrobetaine dioxygenase (387 aa).

4 residues coordinate Zn(2+): Cys38, Cys40, Cys43, and His82. Positions 202, 204, and 347 each coordinate Fe cation. Residue Ser351 is modified to Phosphoserine.

It belongs to the gamma-BBH/TMLD family. It depends on Fe(2+) as a cofactor. L-ascorbate is required as a cofactor. As to expression, highly expressed in kidney; moderately expressed in liver; very low expression in brain.

The protein localises to the cytoplasm. The catalysed reaction is 4-(trimethylamino)butanoate + 2-oxoglutarate + O2 = carnitine + succinate + CO2. Its pathway is amine and polyamine biosynthesis; carnitine biosynthesis. Its function is as follows. Catalyzes the formation of L-carnitine from gamma-butyrobetaine. This Homo sapiens (Human) protein is Gamma-butyrobetaine dioxygenase (BBOX1).